The chain runs to 494 residues: Alanine--glyoxylate aminotransferase 2-like (494 aa).

An N6-(pyridoxal phosphate)lysine modification is found at Lys291.

The protein belongs to the class-III pyridoxal-phosphate-dependent aminotransferase family. It depends on pyridoxal 5'-phosphate as a cofactor.

This chain is Alanine--glyoxylate aminotransferase 2-like, found in Drosophila melanogaster (Fruit fly).